Consider the following 169-residue polypeptide: Probable chemoreceptor glutamine deamidase CheD (169 aa).

The protein belongs to the CheD family.

It catalyses the reaction L-glutaminyl-[protein] + H2O = L-glutamyl-[protein] + NH4(+). In terms of biological role, probably deamidates glutamine residues to glutamate on methyl-accepting chemotaxis receptors (MCPs), playing an important role in chemotaxis. The protein is Probable chemoreceptor glutamine deamidase CheD of Solibacter usitatus (strain Ellin6076).